A 300-amino-acid polypeptide reads, in one-letter code: Auxin-responsive protein IAA7 (300 aa).

Disordered stretches follow at residues M1–K80 and V92–N125. An EAR-like (transcriptional repression) motif is present at residues L43–L47. Polar residues predominate over residues V92 to K103. Residues A177–T281 form the PB1 domain.

The protein belongs to the Aux/IAA family. In terms of assembly, homodimers and heterodimers. As to expression, expressed at low levels in roots and shoots.

Its subcellular location is the nucleus. Its function is as follows. Aux/IAA proteins are short-lived transcriptional factors that function as repressors of early auxin response genes at low auxin concentrations. This chain is Auxin-responsive protein IAA7 (IAA7), found in Oryza sativa subsp. japonica (Rice).